A 115-amino-acid polypeptide reads, in one-letter code: Tyrosine-protein phosphatase 19 (115 aa).

A Tyrosine-protein phosphatase domain is found at 1–115 (WLMIVEQKCR…ETGSDAPMVV (115 aa)). Asp83 is a binding site for substrate.

Belongs to the protein-tyrosine phosphatase family.

It carries out the reaction O-phospho-L-tyrosyl-[protein] + H2O = L-tyrosyl-[protein] + phosphate. The sequence is that of Tyrosine-protein phosphatase 19 (STY-19) from Styela plicata (Wrinkled sea squirt).